A 501-amino-acid chain; its full sequence is ATP synthase subunit alpha (501 aa).

169-176 (GDRQTGKT) contributes to the ATP binding site.

This sequence belongs to the ATPase alpha/beta chains family. As to quaternary structure, F-type ATPases have 2 components, CF(1) - the catalytic core - and CF(0) - the membrane proton channel. CF(1) has five subunits: alpha(3), beta(3), gamma(1), delta(1), epsilon(1). CF(0) has three main subunits: a(1), b(2) and c(9-12). The alpha and beta chains form an alternating ring which encloses part of the gamma chain. CF(1) is attached to CF(0) by a central stalk formed by the gamma and epsilon chains, while a peripheral stalk is formed by the delta and b chains.

It localises to the cell inner membrane. The catalysed reaction is ATP + H2O + 4 H(+)(in) = ADP + phosphate + 5 H(+)(out). In terms of biological role, produces ATP from ADP in the presence of a proton gradient across the membrane. The alpha chain is a regulatory subunit. This is ATP synthase subunit alpha from Campylobacter jejuni subsp. jejuni serotype O:23/36 (strain 81-176).